Consider the following 312-residue polypeptide: Olfactory receptor 2M7 (312 aa).

Residues 1 to 25 (MAWENQTFNSDFLLLGIFNHSPTHT) are Extracellular-facing. The N-linked (GlcNAc...) asparagine glycan is linked to Asn-5. A helical membrane pass occupies residues 26–49 (FLFFLVLAIFSVAFMGNSIMVLLI). Residues 50–57 (YLDTQLHT) are Cytoplasmic-facing. Residues 58-79 (PMYFLLSQLSLMDLMLICTTVP) form a helical membrane-spanning segment. Over 80–100 (KMAFNYLSGSKSISMAGCATQ) the chain is Extracellular. The cysteines at positions 97 and 189 are disulfide-linked. Residues 101–120 (IFFYISLLGSECFLLAVMSY) traverse the membrane as a helical segment. The Cytoplasmic segment spans residues 121–139 (DRYTAICHPLRYTNLMRPK). Residues 140 to 158 (ICGLMTAFSWILGSTDGII) traverse the membrane as a helical segment. The Extracellular portion of the chain corresponds to 159–195 (DAVATFSFSYCGSREIAHFCCDFPSLLILSCNDTSIF). Residues 196 to 219 (EEVIFICCIVMLVFPVAIIITSYA) traverse the membrane as a helical segment. At 220–236 (RVILAVIHMGSGEGRRK) the chain is on the cytoplasmic side. A helical membrane pass occupies residues 237 to 259 (AFTTCSSHLMVVGMYYGAGLFMC). The Extracellular portion of the chain corresponds to 260 to 272 (IQPTSHHSPMQDK). A helical transmembrane segment spans residues 273 to 292 (MVSVFYTIVTPMLNPLIYSL). Residues 293–311 (RNKEVTRALMKILGKGKSG) are Cytoplasmic-facing.

The protein belongs to the G-protein coupled receptor 1 family.

It localises to the cell membrane. In terms of biological role, odorant receptor. The protein is Olfactory receptor 2M7 (OR2M7) of Homo sapiens (Human).